Here is an 805-residue protein sequence, read N- to C-terminus: Zinc finger CCCH domain-containing protein 11B (805 aa).

2 C3H1-type zinc fingers span residues 2–29 and 31–57; these read PNQG…HCEA and LGNE…HMEI. Disordered stretches follow at residues 140–194, 223–351, 364–433, 449–468, 481–506, and 715–805; these read KVES…GLRV, KKMK…DKVN, MLLE…TCIK, IVAS…SMQE, KALR…PGAR, and VTVP…PLEL. Positions 160-175 are enriched in acidic residues; sequence ADDDEDDDDQFSEEGD. Positions 364–390 are enriched in basic and acidic residues; the sequence is MLLERASQKHGESQTKLKTEGPSKTDD. Polar residues predominate over residues 391-402; that stretch reads STSGARSSSTIR. A coiled-coil region spans residues 403–423; that stretch reads IKTFSEVLAEEEHRQQEAERQ. 2 stretches are compositionally biased toward basic and acidic residues: residues 412–433 and 455–468; these read EEEH…TCIK and QSEE…SMQE. Composition is skewed to low complexity over residues 486-498 and 730-749; these read QQSS…SPSQ and PPTQ…PSSS. The segment covering 750–763 has biased composition (polar residues); the sequence is QMSMKTRRLSSAST. Over residues 789 to 805 the composition is skewed to acidic residues; it reads EIDLDPGKDEDDLPLEL.

May play a role in mRNA transport. The sequence is that of Zinc finger CCCH domain-containing protein 11B from Homo sapiens (Human).